The primary structure comprises 227 residues: Cleavage and polyadenylation specificity factor subunit 5 (227 aa).

The region spanning 76-201 is the Nudix hydrolase domain; that stretch reads MRRTVEGVLI…KLVAAPLFEL (126 aa). An interaction with RNA region spans residues 102–104; that stretch reads TFF. The Nudix box signature appears at 109–130; sequence GELNPGEDEVEGLKRLMTEILG.

This sequence belongs to the Nudix hydrolase family. CPSF5 subfamily. In terms of assembly, homodimer (via N- and C-terminus); binds RNA as homodimer. Component of the cleavage factor Im (CFIm) complex.

It localises to the nucleus. Its subcellular location is the cytoplasm. Component of the cleavage factor Im (CFIm) complex that functions as an activator of the pre-mRNA 3'-end cleavage and polyadenylation processing required for the maturation of pre-mRNA into functional mRNAs. CFIm contributes to the recruitment of multiprotein complexes on specific sequences on the pre-mRNA 3'-end, so called cleavage and polyadenylation signals (pA signals). Most pre-mRNAs contain multiple pA signals, resulting in alternative cleavage and polyadenylation (APA) producing mRNAs with variable 3'-end formation. The CFIm complex acts as a key regulator of cleavage and polyadenylation site choice during APA through its binding to 5'-UGUA-3' elements localized in the 3'-untranslated region (UTR) for a huge number of pre-mRNAs. Binds to 5'-UGUA-3' elements localized upstream of pA signals that act as enhancers of pre-mRNA 3'-end processing. The homodimer mediates simultaneous sequence-specific recognition of two 5'-UGUA-3' elements within the pre-mRNA. Plays a role in somatic cell fate transitions and pluripotency by regulating widespread changes in gene expression through an APA-dependent function. Binds to chromatin. Binds to, but does not hydrolyze mono- and di-adenosine nucleotides. The chain is Cleavage and polyadenylation specificity factor subunit 5 from Xenopus laevis (African clawed frog).